We begin with the raw amino-acid sequence, 215 residues long: NAD(P)H-hydrate epimerase (215 aa).

The region spanning 10–212 is the YjeF N-terminal domain; it reads SRELDDKTIN…DIGIYRGNAF (203 aa). A (6S)-NADPHX-binding site is contributed by 59 to 63; sequence NNGGD. 2 residues coordinate K(+): Asn60 and Asp122. Residues 126-132 and Asp155 each bind (6S)-NADPHX; that span reads GSGLSRN. Residue Ser158 coordinates K(+).

The protein belongs to the NnrE/AIBP family. Requires K(+) as cofactor.

It carries out the reaction (6R)-NADHX = (6S)-NADHX. The catalysed reaction is (6R)-NADPHX = (6S)-NADPHX. Functionally, catalyzes the epimerization of the S- and R-forms of NAD(P)HX, a damaged form of NAD(P)H that is a result of enzymatic or heat-dependent hydration. This is a prerequisite for the S-specific NAD(P)H-hydrate dehydratase to allow the repair of both epimers of NAD(P)HX. The polypeptide is NAD(P)H-hydrate epimerase (Lentilactobacillus buchneri (strain NRRL B-30929) (Lactobacillus buchneri)).